A 161-amino-acid polypeptide reads, in one-letter code: Phosphopantetheine adenylyltransferase (161 aa).

Substrate is bound at residue Thr-11. ATP is bound by residues Thr-11–Phe-12 and His-19. Substrate contacts are provided by Lys-43, Thr-75, and Arg-89. ATP-binding positions include Gly-90–Arg-92, Glu-100, and Tyr-125–Ser-131.

The protein belongs to the bacterial CoaD family. In terms of assembly, homohexamer. Mg(2+) is required as a cofactor.

It localises to the cytoplasm. The enzyme catalyses (R)-4'-phosphopantetheine + ATP + H(+) = 3'-dephospho-CoA + diphosphate. It participates in cofactor biosynthesis; coenzyme A biosynthesis; CoA from (R)-pantothenate: step 4/5. Functionally, reversibly transfers an adenylyl group from ATP to 4'-phosphopantetheine, yielding dephospho-CoA (dPCoA) and pyrophosphate. This Listeria innocua serovar 6a (strain ATCC BAA-680 / CLIP 11262) protein is Phosphopantetheine adenylyltransferase.